The following is a 452-amino-acid chain: Keratin, type II cytoskeletal 80 (452 aa).

The interval 1–82 (MACRSCVVGF…DPAVQQLKNQ (82 aa)) is head. Residue S45 is modified to Phosphoserine. The tract at residues 82–118 (QEKEEMKALNDKFASLIGKVQALEQRNQLLETRWSFL) is coil 1A. An IF rod domain is found at 83 to 394 (EKEEMKALND…KLVEGEEGRM (312 aa)). Residues 119–135 (QGQDSAIFDLGHLYEEY) are linker 1. Residues 136-227 (QGRLQEELRK…TIYEQELKDL (92 aa)) form a coil 1B region. The segment at 228–251 (AAQVKDVSVTVGMDSRCHIDLSGI) is linker 12. The tract at residues 252 to 390 (VEEVKAQYDA…ATYRKLVEGE (139 aa)) is coil 2. Residues 391 to 452 (EGRMDSPSAT…YFSQESEVSE (62 aa)) form a tail region. S396 is modified (phosphoserine). Residues 412-434 (AASRSGLSKAPSRKKKGSKGPVI) are disordered.

It belongs to the intermediate filament family. In terms of assembly, heterotetramer of two type I and two type II keratins. In terms of tissue distribution, weakly expressed in tongue, but not skin or in any other tissues or organs examined.

This chain is Keratin, type II cytoskeletal 80 (KRT80), found in Homo sapiens (Human).